The following is a 159-amino-acid chain: Transcriptional repressor NrdR (159 aa).

The segment at 3 to 34 (CPKCGYNKSSVVDSRQAEEGTTIRRRRECEKC) is a zinc-finger region. One can recognise an ATP-cone domain in the interval 49–139 (LLVIKKDGTR…VYKSFKDVDE (91 aa)).

It belongs to the NrdR family. The cofactor is Zn(2+).

Negatively regulates transcription of bacterial ribonucleotide reductase nrd genes and operons by binding to NrdR-boxes. The polypeptide is Transcriptional repressor NrdR (Streptococcus agalactiae serotype Ia (strain ATCC 27591 / A909 / CDC SS700)).